The sequence spans 347 residues: Probable dual-specificity RNA methyltransferase RlmN (347 aa).

The active-site Proton acceptor is E90. The Radical SAM core domain maps to 96 to 326 (YKHGNSICIS…VTVRREMGSD (231 aa)). The cysteines at positions 103 and 331 are disulfide-linked. C110, C114, and C117 together coordinate [4Fe-4S] cluster. Residues 157 to 158 (GE), S189, 212 to 214 (SLH), and N288 each bind S-adenosyl-L-methionine. The active-site S-methylcysteine intermediate is C331.

Belongs to the radical SAM superfamily. RlmN family. The cofactor is [4Fe-4S] cluster.

Its subcellular location is the cytoplasm. The enzyme catalyses adenosine(2503) in 23S rRNA + 2 reduced [2Fe-2S]-[ferredoxin] + 2 S-adenosyl-L-methionine = 2-methyladenosine(2503) in 23S rRNA + 5'-deoxyadenosine + L-methionine + 2 oxidized [2Fe-2S]-[ferredoxin] + S-adenosyl-L-homocysteine. It carries out the reaction adenosine(37) in tRNA + 2 reduced [2Fe-2S]-[ferredoxin] + 2 S-adenosyl-L-methionine = 2-methyladenosine(37) in tRNA + 5'-deoxyadenosine + L-methionine + 2 oxidized [2Fe-2S]-[ferredoxin] + S-adenosyl-L-homocysteine. Functionally, specifically methylates position 2 of adenine 2503 in 23S rRNA and position 2 of adenine 37 in tRNAs. The sequence is that of Probable dual-specificity RNA methyltransferase RlmN from Clostridium botulinum (strain Eklund 17B / Type B).